Consider the following 248-residue polypeptide: Probable transcriptional regulatory protein blr1534 (248 aa).

A disordered region spans residues 1–21 (MAGHSQFKNIMHRKGRQDAQK).

The protein belongs to the TACO1 family.

It is found in the cytoplasm. In Bradyrhizobium diazoefficiens (strain JCM 10833 / BCRC 13528 / IAM 13628 / NBRC 14792 / USDA 110), this protein is Probable transcriptional regulatory protein blr1534.